Reading from the N-terminus, the 253-residue chain is Putative B3 domain-containing protein Os03g0619850 (253 aa).

Positions 26-119 (MSCFLIRMTT…CFEVMILDSD (94 aa)) form a DNA-binding region, TF-B3. Disordered stretches follow at residues 126–150 (LKSN…AGPP) and 230–253 (HRDA…EQDS). Basic and acidic residues predominate over residues 230–239 (HRDADQERQM).

It localises to the nucleus. The chain is Putative B3 domain-containing protein Os03g0619850 from Oryza sativa subsp. japonica (Rice).